A 236-amino-acid polypeptide reads, in one-letter code: MTRRYWNINLKEMIEAGVHFGHGIKKWNPKMAPYISAKRKGTHITNLARTTRFLSEACDLVFDAASQGKSFLIVGTKKRAADLVASAAIRARCHYVNKKWFSGMLTNWSITKTRLSQFRDLRAEEKMEKFHHLPKRDVAILKRKLSTLLRYLGGIKYMTRLPDIVIVLDQQKEYIALRECAILGIPTISLADTNCDPDLANISIPANDDTMTSIRLILNKLVFAICEGRSLYIRNH.

It belongs to the universal ribosomal protein uS2 family.

Its subcellular location is the plastid. It localises to the chloroplast. The protein is Small ribosomal subunit protein uS2c (rps2) of Oryza nivara (Indian wild rice).